We begin with the raw amino-acid sequence, 158 residues long: 2-C-methyl-D-erythritol 2,4-cyclodiphosphate synthase (158 aa).

A divalent metal cation-binding residues include Asp-9 and His-11. 4-CDP-2-C-methyl-D-erythritol 2-phosphate is bound by residues 9-11 (DVH) and 35-36 (HS). Residue His-43 participates in a divalent metal cation binding. Residues 57-59 (DIG), 62-66 (FPDTD), 101-107 (AQAPKMA), 133-136 (TTTE), Phe-140, and Arg-143 each bind 4-CDP-2-C-methyl-D-erythritol 2-phosphate.

It belongs to the IspF family. Homotrimer. A divalent metal cation is required as a cofactor.

The enzyme catalyses 4-CDP-2-C-methyl-D-erythritol 2-phosphate = 2-C-methyl-D-erythritol 2,4-cyclic diphosphate + CMP. The protein operates within isoprenoid biosynthesis; isopentenyl diphosphate biosynthesis via DXP pathway; isopentenyl diphosphate from 1-deoxy-D-xylulose 5-phosphate: step 4/6. Functionally, involved in the biosynthesis of isopentenyl diphosphate (IPP) and dimethylallyl diphosphate (DMAPP), two major building blocks of isoprenoid compounds. Catalyzes the conversion of 4-diphosphocytidyl-2-C-methyl-D-erythritol 2-phosphate (CDP-ME2P) to 2-C-methyl-D-erythritol 2,4-cyclodiphosphate (ME-CPP) with a corresponding release of cytidine 5-monophosphate (CMP). The sequence is that of 2-C-methyl-D-erythritol 2,4-cyclodiphosphate synthase from Vibrio campbellii (strain ATCC BAA-1116).